The primary structure comprises 422 residues: MVTIVLGAQFGDEGKGKITDLLSQSATLCCRAAGGHNAGHTIVHDNITYDFHILPSGLIAPDCVNLIGTGTVVHLPSFFKELDALKAKGLKDAHERIFISDRAQVCFDLHSVVDGLEEASLAGKKVGTTGKGIGPCYSDKAARRGVRIGEVLEEGVVEDNLRKLEAGYRARFGELNYDLEEEIGRFNEYRTKLQPYVVDQMTFLAKYRSSPSILVEGANALMLDIDHGTYPYVTSSCTGVGGAIQGLTLNPTSIRSIIGVVKAYSTRVGSGPFPTEQNNAIGEKMQTIGREFGVTTGRRRRCGWLDMVMCRYSNSINHYTSINLTKLDILDDFDEIKVAVAYKLDGKRLESFPALPGVLDKVEAEYVTFPGWKSTTMGITRWEDLPANAQRYIQFIEREMGGVPIKWIGTGPARTHMIEREV.

GTP is bound by residues 11-17 (GDEGKGK) and 39-41 (GHT). The active-site Proton acceptor is Asp12. Positions 12 and 39 each coordinate Mg(2+). IMP contacts are provided by residues 12–15 (DEGK), 37–40 (NAGH), Thr129, Arg143, Asn219, Thr234, and Arg298. His40 serves as the catalytic Proton donor. 294-300 (VTTGRRR) serves as a coordination point for substrate. GTP contacts are provided by residues Arg300, 326–328 (KLD), and 409–411 (GTG).

This sequence belongs to the adenylosuccinate synthetase family. In terms of assembly, homodimer. Mg(2+) is required as a cofactor.

Its subcellular location is the cytoplasm. It catalyses the reaction IMP + L-aspartate + GTP = N(6)-(1,2-dicarboxyethyl)-AMP + GDP + phosphate + 2 H(+). The protein operates within purine metabolism; AMP biosynthesis via de novo pathway; AMP from IMP: step 1/2. In terms of biological role, plays an important role in the de novo pathway and in the salvage pathway of purine nucleotide biosynthesis. Catalyzes the first committed step in the biosynthesis of AMP from IMP. The sequence is that of Adenylosuccinate synthetase from Ajellomyces capsulatus (strain H143) (Darling's disease fungus).